Here is a 154-residue protein sequence, read N- to C-terminus: Endoribonuclease YbeY (154 aa).

3 residues coordinate Zn(2+): H114, H118, and H124.

It belongs to the endoribonuclease YbeY family. Zn(2+) is required as a cofactor.

It is found in the cytoplasm. Functionally, single strand-specific metallo-endoribonuclease involved in late-stage 70S ribosome quality control and in maturation of the 3' terminus of the 16S rRNA. This is Endoribonuclease YbeY from Histophilus somni (strain 2336) (Haemophilus somnus).